The following is a 274-amino-acid chain: Phosphatidylglycerol--prolipoprotein diacylglyceryl transferase (274 aa).

Transmembrane regions (helical) follow at residues 22–42, 61–81, 96–116, 125–145, 177–197, 204–224, and 238–258; these read LSVR…MWLA, LLFY…VLFY, IWTG…AMVW, FFTV…VGRI, SQLY…NLFW, GAIS…VEFV, and ISMG…MIWV. Residue arginine 144 participates in a 1,2-diacyl-sn-glycero-3-phospho-(1'-sn-glycerol) binding.

The protein belongs to the Lgt family.

It localises to the cell inner membrane. It catalyses the reaction L-cysteinyl-[prolipoprotein] + a 1,2-diacyl-sn-glycero-3-phospho-(1'-sn-glycerol) = an S-1,2-diacyl-sn-glyceryl-L-cysteinyl-[prolipoprotein] + sn-glycerol 1-phosphate + H(+). It participates in protein modification; lipoprotein biosynthesis (diacylglyceryl transfer). Its function is as follows. Catalyzes the transfer of the diacylglyceryl group from phosphatidylglycerol to the sulfhydryl group of the N-terminal cysteine of a prolipoprotein, the first step in the formation of mature lipoproteins. The chain is Phosphatidylglycerol--prolipoprotein diacylglyceryl transferase from Aeromonas hydrophila subsp. hydrophila (strain ATCC 7966 / DSM 30187 / BCRC 13018 / CCUG 14551 / JCM 1027 / KCTC 2358 / NCIMB 9240 / NCTC 8049).